The chain runs to 162 residues: Nucleotide-binding protein AnaeK_0101 (162 aa).

Belongs to the YajQ family.

Functionally, nucleotide-binding protein. The protein is Nucleotide-binding protein AnaeK_0101 of Anaeromyxobacter sp. (strain K).